Reading from the N-terminus, the 137-residue chain is Large ribosomal subunit protein uL16 (137 aa).

The tract at residues Met-1–Val-20 is disordered. Residues Arg-7–Asn-17 show a composition bias toward basic residues.

The protein belongs to the universal ribosomal protein uL16 family. Part of the 50S ribosomal subunit.

Binds 23S rRNA and is also seen to make contacts with the A and possibly P site tRNAs. The chain is Large ribosomal subunit protein uL16 from Coxiella burnetii (strain CbuG_Q212) (Coxiella burnetii (strain Q212)).